A 101-amino-acid polypeptide reads, in one-letter code: NAD(P)H-quinone oxidoreductase subunit 4L, chloroplastic (101 aa).

3 consecutive transmembrane segments (helical) span residues 2 to 22 (ILEHVLVLSAYLFLIGLYGLI), 32 to 52 (MCLELILNAVNMNFVTFSDFF), and 61 to 81 (IFCIFVIAIAAAEAAIGLAIV).

It belongs to the complex I subunit 4L family. NDH is composed of at least 16 different subunits, 5 of which are encoded in the nucleus.

It is found in the plastid. The protein localises to the chloroplast thylakoid membrane. The catalysed reaction is a plastoquinone + NADH + (n+1) H(+)(in) = a plastoquinol + NAD(+) + n H(+)(out). It carries out the reaction a plastoquinone + NADPH + (n+1) H(+)(in) = a plastoquinol + NADP(+) + n H(+)(out). In terms of biological role, NDH shuttles electrons from NAD(P)H:plastoquinone, via FMN and iron-sulfur (Fe-S) centers, to quinones in the photosynthetic chain and possibly in a chloroplast respiratory chain. The immediate electron acceptor for the enzyme in this species is believed to be plastoquinone. Couples the redox reaction to proton translocation, and thus conserves the redox energy in a proton gradient. The polypeptide is NAD(P)H-quinone oxidoreductase subunit 4L, chloroplastic (Lepidium virginicum (Virginia pepperweed)).